We begin with the raw amino-acid sequence, 431 residues long: Probable prephenate dehydrogenase [NADP(+)] (431 aa).

5–34 (FQVGIIGFGDMGRLYAEYISKAGWRVNVCD) provides a ligand contact to NADP(+). A Prephenate/arogenate dehydrogenase domain is found at 5-285 (FQVGIIGFGD…GENMDRNSSG (281 aa)).

The protein belongs to the prephenate/arogenate dehydrogenase family.

It localises to the cytoplasm. The catalysed reaction is prephenate + NADP(+) = 3-(4-hydroxyphenyl)pyruvate + CO2 + NADPH. The protein operates within amino-acid biosynthesis; L-tyrosine biosynthesis; (4-hydroxyphenyl)pyruvate from prephenate (NADP(+) route): step 1/1. The chain is Probable prephenate dehydrogenase [NADP(+)] (tyr1) from Schizosaccharomyces pombe (strain 972 / ATCC 24843) (Fission yeast).